Consider the following 448-residue polypeptide: Tubulin beta chain (448 aa).

GTP is bound by residues Q11, E69, S138, G142, T143, G144, N204, and N226. E69 lines the Mg(2+) pocket. Positions 429 to 448 (GIDEGDEDYEIEEEKEPLEY) are disordered.

The protein belongs to the tubulin family. In terms of assembly, dimer of alpha and beta chains. A typical microtubule is a hollow water-filled tube with an outer diameter of 25 nm and an inner diameter of 15 nM. Alpha-beta heterodimers associate head-to-tail to form protofilaments running lengthwise along the microtubule wall with the beta-tubulin subunit facing the microtubule plus end conferring a structural polarity. Microtubules usually have 13 protofilaments but different protofilament numbers can be found in some organisms and specialized cells. It depends on Mg(2+) as a cofactor.

Its subcellular location is the cytoplasm. It localises to the cytoskeleton. Functionally, tubulin is the major constituent of microtubules, a cylinder consisting of laterally associated linear protofilaments composed of alpha- and beta-tubulin heterodimers. Microtubules grow by the addition of GTP-tubulin dimers to the microtubule end, where a stabilizing cap forms. Below the cap, tubulin dimers are in GDP-bound state, owing to GTPase activity of alpha-tubulin. The polypeptide is Tubulin beta chain (nda3) (Schizosaccharomyces pombe (strain 972 / ATCC 24843) (Fission yeast)).